The following is an 89-amino-acid chain: Class I hydrophobin D (89 aa).

A signal peptide spans 1–16; the sequence is MKFSLATIALAAAVVA. 4 cysteine pairs are disulfide-bonded: Cys-28–Cys-68, Cys-39–Cys-60, Cys-40–Cys-52, and Cys-69–Cys-85. A glycan (N-linked (GlcNAc...) asparagine) is linked at Asn-36.

Belongs to the fungal hydrophobin family.

Its subcellular location is the secreted. The protein localises to the cell wall. The protein resides in the vacuole. It localises to the cytoplasmic vesicle. Aerial growth, conidiation, and dispersal of filamentous fungi in the environment rely upon a capability of their secreting small amphipathic proteins called hydrophobins (HPBs) with low sequence identity. Class I can self-assemble into an outermost layer of rodlet bundles on aerial cell surfaces, conferring cellular hydrophobicity that supports fungal growth, development and dispersal; whereas Class II form highly ordered films at water-air interfaces through intermolecular interactions but contribute nothing to the rodlet structure. Hyd1D contributes to certain cell wall-related features, such as hydrophobicity but is not involved in cell wall-related events during fungal proliferation in host hemocoel. Does not contribute to conidial hydrophobicity. Involved in insect hemocoel colonization independent of cell hydrophobicity. The protein is Class I hydrophobin D of Beauveria bassiana (strain ARSEF 2860) (White muscardine disease fungus).